Reading from the N-terminus, the 582-residue chain is Leucine-rich repeat transmembrane neuronal protein 3 (582 aa).

An N-terminal signal peptide occupies residues 1–30 (MGFNVIRLLRGSAVAVVLAPTVLLTMLSSA). In terms of domain architecture, LRRNT spans 31–61 (ERGCPKGCRCEGKMVYCESQKLQEIPSSISA). The Extracellular portion of the chain corresponds to 31–420 (ERGCPKGCRC…VDTEHISFHK (390 aa)). LRR repeat units lie at residues 63-83 (CLGL…QFKG), 86-107 (QLTW…AFNG), 110-131 (RLKE…TFRP), 134-155 (NLRN…QFRG), 158-179 (KLLS…IFQD), 182-203 (NLEL…VFAG), 206-226 (RLKE…ALFP), 230-251 (SLQN…MSWT), 254-275 (SLQR…SVFQ), and 279-300 (NLQR…ILDS). The N-linked (GlcNAc...) asparagine glycan is linked to N126. The LRRCT domain maps to 312-363 (NIWECSRNICSLVNWLRSFKGLRENTIICASPKELQGVNVIDAVKNYSICGK). A glycan (N-linked (GlcNAc...) asparagine) is linked at N357. Positions 378–410 (KPTFKPKLPRPKHESKPPLPPTVGATEPSPETD) are disordered. Residues 421–441 (IIAGSVALFLSVLVILLVMYV) traverse the membrane as a helical segment. Residues 442–582 (SWKRYPASMK…RISDHKPQLA (141 aa)) lie on the Cytoplasmic side of the membrane.

This sequence belongs to the LRRTM family. In terms of tissue distribution, expressed in neuronal tissues.

The protein resides in the cell membrane. Its subcellular location is the postsynaptic cell membrane. Its function is as follows. May play a role in the development and maintenance of the vertebrate nervous system. Exhibits a limited synaptogenic activity in vitro, restricted to excitatory presynaptic differentiation. The protein is Leucine-rich repeat transmembrane neuronal protein 3 (Lrrtm3) of Mus musculus (Mouse).